A 468-amino-acid polypeptide reads, in one-letter code: Proline--tRNA ligase (468 aa).

This sequence belongs to the class-II aminoacyl-tRNA synthetase family. ProS type 3 subfamily. As to quaternary structure, homodimer.

It is found in the cytoplasm. The catalysed reaction is tRNA(Pro) + L-proline + ATP = L-prolyl-tRNA(Pro) + AMP + diphosphate. In terms of biological role, catalyzes the attachment of proline to tRNA(Pro) in a two-step reaction: proline is first activated by ATP to form Pro-AMP and then transferred to the acceptor end of tRNA(Pro). In Frankia casuarinae (strain DSM 45818 / CECT 9043 / HFP020203 / CcI3), this protein is Proline--tRNA ligase.